Here is a 79-residue protein sequence, read N- to C-terminus: Three-finger toxin A2 (79 aa).

The first 21 residues, methionine 1–serine 21, serve as a signal peptide directing secretion. Cystine bridges form between cysteine 24-cysteine 41, cysteine 34-cysteine 59, cysteine 63-cysteine 71, and cysteine 72-cysteine 77.

This sequence belongs to the three-finger toxin family. Short-chain subfamily. As to expression, expressed by the venom gland.

It is found in the secreted. The chain is Three-finger toxin A2 from Micrurus laticollaris (Balsas coral snake).